A 1111-amino-acid chain; its full sequence is Putative leucine--tRNA ligase, cytoplasmic (1111 aa).

The short motif at 74–84 (PYMNGALHLGH) is the 'HIGH' region element. The residue at position 460 (serine 460) is a Phosphoserine. The 'KMSKS' region motif lies at 737–741 (KMSKS). Residue lysine 740 participates in ATP binding.

This sequence belongs to the class-I aminoacyl-tRNA synthetase family.

It localises to the cytoplasm. The enzyme catalyses tRNA(Leu) + L-leucine + ATP = L-leucyl-tRNA(Leu) + AMP + diphosphate. This is Putative leucine--tRNA ligase, cytoplasmic (lrs1) from Schizosaccharomyces pombe (strain 972 / ATCC 24843) (Fission yeast).